Here is a 77-residue protein sequence, read N- to C-terminus: Translation initiation factor IF-1, chloroplastic (77 aa).

Residues 1-71 (MKEQKWIHEG…TRGRIIYRLR (71 aa)) form the S1-like domain.

It belongs to the IF-1 family. As to quaternary structure, component of the 30S ribosomal translation pre-initiation complex which assembles on the 30S ribosome in the order IF-2 and IF-3, IF-1 and N-formylmethionyl-tRNA(fMet); mRNA recruitment can occur at any time during PIC assembly.

The protein resides in the plastid. It is found in the chloroplast. Functionally, one of the essential components for the initiation of protein synthesis. Stabilizes the binding of IF-2 and IF-3 on the 30S subunit to which N-formylmethionyl-tRNA(fMet) subsequently binds. Helps modulate mRNA selection, yielding the 30S pre-initiation complex (PIC). Upon addition of the 50S ribosomal subunit IF-1, IF-2 and IF-3 are released leaving the mature 70S translation initiation complex. This chain is Translation initiation factor IF-1, chloroplastic, found in Antirrhinum majus (Garden snapdragon).